Here is a 331-residue protein sequence, read N- to C-terminus: Ornithine carbamoyltransferase (331 aa).

Residues 55 to 58 (STRT), glutamine 82, arginine 106, and 133 to 136 (HPTQ) each bind carbamoyl phosphate. Residues asparagine 166, aspartate 230, and 234–235 (SM) each bind L-ornithine. Residues 272-273 (CL) and arginine 317 each bind carbamoyl phosphate.

The protein belongs to the aspartate/ornithine carbamoyltransferase superfamily. OTCase family.

The protein resides in the cytoplasm. It carries out the reaction carbamoyl phosphate + L-ornithine = L-citrulline + phosphate + H(+). Its pathway is amino-acid biosynthesis; L-arginine biosynthesis; L-arginine from L-ornithine and carbamoyl phosphate: step 1/3. Reversibly catalyzes the transfer of the carbamoyl group from carbamoyl phosphate (CP) to the N(epsilon) atom of ornithine (ORN) to produce L-citrulline. The protein is Ornithine carbamoyltransferase (argF) of Neisseria meningitidis serogroup B (strain ATCC BAA-335 / MC58).